Consider the following 506-residue polypeptide: D-alanine--D-alanyl carrier protein ligase (506 aa).

152-153 (TS) serves as a coordination point for ATP. Asp-197 lines the D-alanine pocket. Residue 292–297 (NTYGPT) coordinates ATP. Position 301 (Val-301) interacts with D-alanine. ATP contacts are provided by residues Asp-383, 395 to 398 (YRGR), and Lys-494. Lys-494 provides a ligand contact to D-alanine.

It belongs to the ATP-dependent AMP-binding enzyme family. DltA subfamily.

Its subcellular location is the cytoplasm. It catalyses the reaction holo-[D-alanyl-carrier protein] + D-alanine + ATP = D-alanyl-[D-alanyl-carrier protein] + AMP + diphosphate. Its pathway is cell wall biogenesis; lipoteichoic acid biosynthesis. Its function is as follows. Catalyzes the first step in the D-alanylation of lipoteichoic acid (LTA), the activation of D-alanine and its transfer onto the D-alanyl carrier protein (Dcp) DltC. In an ATP-dependent two-step reaction, forms a high energy D-alanyl-AMP intermediate, followed by transfer of the D-alanyl residue as a thiol ester to the phosphopantheinyl prosthetic group of the Dcp. D-alanylation of LTA plays an important role in modulating the properties of the cell wall in Gram-positive bacteria, influencing the net charge of the cell wall. This is D-alanine--D-alanyl carrier protein ligase from Lacticaseibacillus paracasei (strain ATCC 334 / BCRC 17002 / CCUG 31169 / CIP 107868 / KCTC 3260 / NRRL B-441) (Lactobacillus paracasei).